Here is a 191-residue protein sequence, read N- to C-terminus: Glycerol-3-phosphate acyltransferase (191 aa).

The next 5 helical transmembrane spans lie at Ile-5–Ile-25, Leu-51–Gln-71, Asp-78–Leu-98, Ile-114–Ile-134, and Ser-153–Leu-173.

Belongs to the PlsY family. As to quaternary structure, probably interacts with PlsX.

The protein resides in the cell membrane. It catalyses the reaction an acyl phosphate + sn-glycerol 3-phosphate = a 1-acyl-sn-glycero-3-phosphate + phosphate. It functions in the pathway lipid metabolism; phospholipid metabolism. Catalyzes the transfer of an acyl group from acyl-phosphate (acyl-PO(4)) to glycerol-3-phosphate (G3P) to form lysophosphatidic acid (LPA). This enzyme utilizes acyl-phosphate as fatty acyl donor, but not acyl-CoA or acyl-ACP. The sequence is that of Glycerol-3-phosphate acyltransferase from Wolbachia pipientis subsp. Culex pipiens (strain wPip).